The primary structure comprises 175 residues: Peptide deformylase (175 aa).

Residues Cys-96 and His-138 each contribute to the Fe cation site. Glu-139 is an active-site residue. Position 142 (His-142) interacts with Fe cation.

Belongs to the polypeptide deformylase family. Fe(2+) is required as a cofactor.

It carries out the reaction N-terminal N-formyl-L-methionyl-[peptide] + H2O = N-terminal L-methionyl-[peptide] + formate. Its function is as follows. Removes the formyl group from the N-terminal Met of newly synthesized proteins. Requires at least a dipeptide for an efficient rate of reaction. N-terminal L-methionine is a prerequisite for activity but the enzyme has broad specificity at other positions. This Helicobacter pylori (strain Shi470) protein is Peptide deformylase.